The chain runs to 91 residues: Large ribosomal subunit protein bL31B (91 aa).

Belongs to the bacterial ribosomal protein bL31 family. Type B subfamily. As to quaternary structure, part of the 50S ribosomal subunit.

This Mycolicibacterium vanbaalenii (strain DSM 7251 / JCM 13017 / BCRC 16820 / KCTC 9966 / NRRL B-24157 / PYR-1) (Mycobacterium vanbaalenii) protein is Large ribosomal subunit protein bL31B.